We begin with the raw amino-acid sequence, 218 residues long: uncharacterized protein (218 aa).

2 helical membrane passes run 8–28 (LAVF…ATAG) and 158–178 (ILFY…FLLI).

The protein resides in the cell membrane. This is an uncharacterized protein from Mycoplasma genitalium (strain ATCC 33530 / DSM 19775 / NCTC 10195 / G37) (Mycoplasmoides genitalium).